The sequence spans 316 residues: tRNA dimethylallyltransferase (316 aa).

14 to 21 (GPTAVGKT) contributes to the ATP binding site. 16–21 (TAVGKT) contributes to the substrate binding site. The interaction with substrate tRNA stretch occupies residues 39–42 (DSMQ).

The protein belongs to the IPP transferase family. As to quaternary structure, monomer. Mg(2+) serves as cofactor.

The catalysed reaction is adenosine(37) in tRNA + dimethylallyl diphosphate = N(6)-dimethylallyladenosine(37) in tRNA + diphosphate. Its function is as follows. Catalyzes the transfer of a dimethylallyl group onto the adenine at position 37 in tRNAs that read codons beginning with uridine, leading to the formation of N6-(dimethylallyl)adenosine (i(6)A). This is tRNA dimethylallyltransferase from Bacillus cytotoxicus (strain DSM 22905 / CIP 110041 / 391-98 / NVH 391-98).